Reading from the N-terminus, the 514-residue chain is Na(+)/H(+) antiporter NhaB (514 aa).

The next 12 helical transmembrane spans lie at 23-43, 63-83, 97-117, 120-140, 144-164, 202-222, 238-258, 303-323, 357-377, 391-411, 447-467, and 475-495; these read LALLVFLIVNPFIFLANPFIA, PLLPGGLLAIEAVIIGMTSAA, LLLMFMVAGIYFMKQLLLFIF, LLLSIRSKMVLSLAFCVAAAF, FLDALTVVAVVISVAVGFYGI, LMMHAGVGTALGGVMTMVGEP, FFLRMSPVTVPVLVCGLLTCM, AVIGVWLVTALALHLAEVGLI, LTVFFSIVAVIIDQHLFAPII, LFYLFNGLLSSISDNVFVGTI, ATPNGQAAFLFLLTSALAPLI, and VWMALPYTIVLTLIGLLCVEF.

The protein belongs to the NhaB Na(+)/H(+) (TC 2.A.34) antiporter family.

It localises to the cell inner membrane. It carries out the reaction 2 Na(+)(in) + 3 H(+)(out) = 2 Na(+)(out) + 3 H(+)(in). In terms of biological role, na(+)/H(+) antiporter that extrudes sodium in exchange for external protons. The polypeptide is Na(+)/H(+) antiporter NhaB (Salmonella choleraesuis (strain SC-B67)).